Consider the following 74-residue polypeptide: UPF0435 protein GK0418 (74 aa).

This sequence belongs to the UPF0435 family.

The sequence is that of UPF0435 protein GK0418 from Geobacillus kaustophilus (strain HTA426).